The sequence spans 130 residues: Small ribosomal subunit protein uS9 (130 aa).

Positions 102–130 (GFLTRDPRMKERKKYGLKKARRSPQFSKR) are disordered. Basic residues predominate over residues 111 to 130 (KERKKYGLKKARRSPQFSKR).

This sequence belongs to the universal ribosomal protein uS9 family.

This Clostridium botulinum (strain ATCC 19397 / Type A) protein is Small ribosomal subunit protein uS9.